We begin with the raw amino-acid sequence, 909 residues long: Probable dipeptidyl-aminopeptidase B (909 aa).

The disordered stretch occupies residues 1–63 (MRVGSRINDE…HNHNGRAQGN (63 aa)). Residues 1–94 (MRVGSRINDE…NGKSNQRRTL (94 aa)) lie on the Cytoplasmic side of the membrane. Over residues 27 to 38 (DSSSTASISLTL) the composition is skewed to low complexity. The chain crosses the membrane as a helical; Signal-anchor for type II membrane protein span at residues 95 to 115 (IVFWLLVALCVGGWAVAFLFF). The Vacuolar portion of the chain corresponds to 116–909 (VTSPGNKTST…YSNFLPIRSF (794 aa)). Asparagine 121 carries an N-linked (GlcNAc...) asparagine glycan. Positions 123–134 (TSTSPHSGSNSP) are enriched in polar residues. The interval 123–144 (TSTSPHSGSNSPEGDVTKPGIP) is disordered. N-linked (GlcNAc...) asparagine glycosylation is found at asparagine 207, asparagine 303, and asparagine 355. Serine 760 acts as the Charge relay system in catalysis. N-linked (GlcNAc...) asparagine glycans are attached at residues asparagine 814, asparagine 819, and asparagine 822. Residues aspartate 837 and histidine 870 each act as charge relay system in the active site. Asparagine 888 carries N-linked (GlcNAc...) asparagine glycosylation.

It belongs to the peptidase S9B family.

It is found in the vacuole membrane. It catalyses the reaction Release of an N-terminal dipeptide, Xaa-Yaa-|-Zaa-, from a polypeptide, preferentially when Yaa is Pro, provided Zaa is neither Pro nor hydroxyproline.. Functionally, type IV dipeptidyl-peptidase which removes N-terminal dipeptides sequentially from polypeptides having unsubstituted N-termini provided that the penultimate residue is proline. This chain is Probable dipeptidyl-aminopeptidase B (DAPB), found in Arthroderma benhamiae (strain ATCC MYA-4681 / CBS 112371) (Trichophyton mentagrophytes).